Reading from the N-terminus, the 856-residue chain is Translation initiation factor IF-2 (856 aa).

In terms of domain architecture, tr-type G spans 356 to 526; the sequence is PRAPVVTVMG…LLIADLLELK (171 aa). The G1 stretch occupies residues 365-372; that stretch reads GHVDHGKT. 365–372 lines the GTP pocket; that stretch reads GHVDHGKT. A G2 region spans residues 390 to 394; it reads GITQH. A G3 region spans residues 412 to 415; it reads DTPG. GTP contacts are provided by residues 412–416 and 466–469; these read DTPGH and NKID. The interval 466 to 469 is G4; sequence NKID. The interval 502 to 504 is G5; sequence SAK.

The protein belongs to the TRAFAC class translation factor GTPase superfamily. Classic translation factor GTPase family. IF-2 subfamily.

It localises to the cytoplasm. One of the essential components for the initiation of protein synthesis. Protects formylmethionyl-tRNA from spontaneous hydrolysis and promotes its binding to the 30S ribosomal subunits. Also involved in the hydrolysis of GTP during the formation of the 70S ribosomal complex. The chain is Translation initiation factor IF-2 from Ehrlichia ruminantium (strain Gardel).